The following is a 264-amino-acid chain: 3-methyl-2-oxobutanoate hydroxymethyltransferase (264 aa).

Asp-45 and Asp-84 together coordinate Mg(2+). Residues 45–46 (DS), Asp-84, and Lys-112 contribute to the 3-methyl-2-oxobutanoate site. Position 114 (Glu-114) interacts with Mg(2+). The active-site Proton acceptor is the Glu-181.

Belongs to the PanB family. In terms of assembly, homodecamer; pentamer of dimers. Mg(2+) serves as cofactor.

It localises to the cytoplasm. It carries out the reaction 3-methyl-2-oxobutanoate + (6R)-5,10-methylene-5,6,7,8-tetrahydrofolate + H2O = 2-dehydropantoate + (6S)-5,6,7,8-tetrahydrofolate. Its pathway is cofactor biosynthesis; (R)-pantothenate biosynthesis; (R)-pantoate from 3-methyl-2-oxobutanoate: step 1/2. Functionally, catalyzes the reversible reaction in which hydroxymethyl group from 5,10-methylenetetrahydrofolate is transferred onto alpha-ketoisovalerate to form ketopantoate. This Vibrio vulnificus (strain YJ016) protein is 3-methyl-2-oxobutanoate hydroxymethyltransferase.